Here is a 273-residue protein sequence, read N- to C-terminus: Formamidopyrimidine-DNA glycosylase (273 aa).

Residue Pro2 is the Schiff-base intermediate with DNA of the active site. Glu3 (proton donor) is an active-site residue. The active-site Proton donor; for beta-elimination activity is the Lys59. Residues His92 and Arg111 each contribute to the DNA site. The FPG-type zinc finger occupies 239–273 (KVYGKTDEPCVVCGKPIEKIKLNGRGTHFCPNCQK). The active-site Proton donor; for delta-elimination activity is Arg263.

This sequence belongs to the FPG family. Monomer. Zn(2+) serves as cofactor.

It carries out the reaction Hydrolysis of DNA containing ring-opened 7-methylguanine residues, releasing 2,6-diamino-4-hydroxy-5-(N-methyl)formamidopyrimidine.. It catalyses the reaction 2'-deoxyribonucleotide-(2'-deoxyribose 5'-phosphate)-2'-deoxyribonucleotide-DNA = a 3'-end 2'-deoxyribonucleotide-(2,3-dehydro-2,3-deoxyribose 5'-phosphate)-DNA + a 5'-end 5'-phospho-2'-deoxyribonucleoside-DNA + H(+). Involved in base excision repair of DNA damaged by oxidation or by mutagenic agents. Acts as a DNA glycosylase that recognizes and removes damaged bases. Has a preference for oxidized purines, such as 7,8-dihydro-8-oxoguanine (8-oxoG). Has AP (apurinic/apyrimidinic) lyase activity and introduces nicks in the DNA strand. Cleaves the DNA backbone by beta-delta elimination to generate a single-strand break at the site of the removed base with both 3'- and 5'-phosphates. The chain is Formamidopyrimidine-DNA glycosylase from Listeria monocytogenes serotype 4b (strain F2365).